Reading from the N-terminus, the 415-residue chain is ATP-dependent RNA helicase RhlB (415 aa).

The Q motif signature appears at 9-37 (QRFSALPLHPIVRGALAKKGFDFCTPIQA). Residues 40-218 (LPISLNGRDV…FEDMNDPEYI (179 aa)) form the Helicase ATP-binding domain. 53–60 (AQTGTGKT) provides a ligand contact to ATP. A DEAD box motif is present at residues 164–167 (DEAD). A Helicase C-terminal domain is found at 241 to 389 (DKMALLLTLM…VSQYETEALL (149 aa)).

The protein belongs to the DEAD box helicase family. RhlB subfamily. As to quaternary structure, component of the RNA degradosome, which is a multiprotein complex involved in RNA processing and mRNA degradation.

It is found in the cytoplasm. The catalysed reaction is ATP + H2O = ADP + phosphate + H(+). Its function is as follows. DEAD-box RNA helicase involved in RNA degradation. Has RNA-dependent ATPase activity and unwinds double-stranded RNA. The sequence is that of ATP-dependent RNA helicase RhlB from Haemophilus influenzae (strain PittGG).